A 403-amino-acid chain; its full sequence is Bifunctional enzyme IspD/IspF (403 aa).

The segment at 1–234 (MPTSKRTAAI…ARLAAMLGDI (234 aa)) is 2-C-methyl-D-erythritol 4-phosphate cytidylyltransferase. The tract at residues 235 to 403 (RTGTGYDVHA…SDQEDKGWST (169 aa)) is 2-C-methyl-D-erythritol 2,4-cyclodiphosphate synthase. A divalent metal cation-binding residues include D241 and H243. 4-CDP-2-C-methyl-D-erythritol 2-phosphate is bound by residues 241-243 (DVH) and 267-268 (HS). A divalent metal cation is bound at residue H275. 4-CDP-2-C-methyl-D-erythritol 2-phosphate-binding positions include 289–291 (DIG), 365–368 (TTSE), F372, and R375.

The protein in the N-terminal section; belongs to the IspD/TarI cytidylyltransferase family. IspD subfamily. This sequence in the C-terminal section; belongs to the IspF family. It depends on a divalent metal cation as a cofactor.

It carries out the reaction 2-C-methyl-D-erythritol 4-phosphate + CTP + H(+) = 4-CDP-2-C-methyl-D-erythritol + diphosphate. The catalysed reaction is 4-CDP-2-C-methyl-D-erythritol 2-phosphate = 2-C-methyl-D-erythritol 2,4-cyclic diphosphate + CMP. It functions in the pathway isoprenoid biosynthesis; isopentenyl diphosphate biosynthesis via DXP pathway; isopentenyl diphosphate from 1-deoxy-D-xylulose 5-phosphate: step 2/6. It participates in isoprenoid biosynthesis; isopentenyl diphosphate biosynthesis via DXP pathway; isopentenyl diphosphate from 1-deoxy-D-xylulose 5-phosphate: step 4/6. Its function is as follows. Bifunctional enzyme that catalyzes the formation of 4-diphosphocytidyl-2-C-methyl-D-erythritol from CTP and 2-C-methyl-D-erythritol 4-phosphate (MEP) (IspD), and catalyzes the conversion of 4-diphosphocytidyl-2-C-methyl-D-erythritol 2-phosphate (CDP-ME2P) to 2-C-methyl-D-erythritol 2,4-cyclodiphosphate (ME-CPP) with a corresponding release of cytidine 5-monophosphate (CMP) (IspF). This chain is Bifunctional enzyme IspD/IspF, found in Nitrobacter hamburgensis (strain DSM 10229 / NCIMB 13809 / X14).